Consider the following 278-residue polypeptide: MQVRQSIHSDHAKQLDTAGLRREFLIEKIFAADDYTMTYSHIDRIIVGGILPVSKAVSIGNEVGKQLGVSYFLERRELGAINIGGPGLIVVDGQTYEIGNEEALYVGKGAKEVKFSSIDRANPAKFYYNSAPAHTTYPNKKITLAEASPQTLGDDATSNRRTINKYIVPDVLPTCQLSMGLTKLAPGSLWNTMPCHTHERRMEVYFYFDMDEETAVFHMMGQPQETRHLLVHNEQAVISPSWSIHSGVGTKRYTFIWGMVGENQVFGDMDHIAVSELR.

Zn(2+) is bound by residues H196, H198, E203, and H245.

This sequence belongs to the KduI family. Requires Zn(2+) as cofactor.

The enzyme catalyses 5-dehydro-4-deoxy-D-glucuronate = 3-deoxy-D-glycero-2,5-hexodiulosonate. The protein operates within glycan metabolism; pectin degradation; 2-dehydro-3-deoxy-D-gluconate from pectin: step 4/5. Its function is as follows. Catalyzes the isomerization of 5-dehydro-4-deoxy-D-glucuronate to 3-deoxy-D-glycero-2,5-hexodiulosonate. This chain is 4-deoxy-L-threo-5-hexosulose-uronate ketol-isomerase, found in Yersinia pseudotuberculosis serotype O:1b (strain IP 31758).